The primary structure comprises 358 residues: Peptide chain release factor 1 (358 aa).

Q233 is modified (N5-methylglutamine).

The protein belongs to the prokaryotic/mitochondrial release factor family. In terms of processing, methylated by PrmC. Methylation increases the termination efficiency of RF1.

The protein localises to the cytoplasm. In terms of biological role, peptide chain release factor 1 directs the termination of translation in response to the peptide chain termination codons UAG and UAA. The polypeptide is Peptide chain release factor 1 (Blochmanniella floridana).